Reading from the N-terminus, the 189-residue chain is Inosine triphosphate pyrophosphatase (189 aa).

8 to 13 contacts ITP; the sequence is TGNANK. Glu-39 serves as a coordination point for Mg(2+). ITP is bound by residues Lys-51, 67 to 68, Lys-84, 143 to 146, Lys-167, and 172 to 173; these read DT, FGWD, and HR.

This sequence belongs to the HAM1 NTPase family. As to quaternary structure, homodimer. It depends on Mg(2+) as a cofactor. The cofactor is Mn(2+).

It is found in the cytoplasm. The protein localises to the nucleus. The catalysed reaction is ITP + H2O = IMP + diphosphate + H(+). It carries out the reaction dITP + H2O = dIMP + diphosphate + H(+). The enzyme catalyses XTP + H2O = XMP + diphosphate + H(+). Its function is as follows. Pyrophosphatase that hydrolyzes non-canonical purine nucleotides such as inosine triphosphate (ITP), deoxyinosine triphosphate (dITP) or xanthosine 5'-triphosphate (XTP) to their respective monophosphate derivatives. The enzyme does not distinguish between the deoxy- and ribose forms. Probably excludes non-canonical purines from RNA and DNA precursor pools, thus preventing their incorporation into RNA and DNA and avoiding chromosomal lesions. The protein is Inosine triphosphate pyrophosphatase of Cryptococcus neoformans var. neoformans serotype D (strain JEC21 / ATCC MYA-565) (Filobasidiella neoformans).